Here is a 497-residue protein sequence, read N- to C-terminus: Apolipoprotein N-acyltransferase (497 aa).

Transmembrane regions (helical) follow at residues 21–41 (FAPF…ALLW), 51–71 (ALTG…WLYV), 85–105 (VLAL…TGWI), 119–139 (GMVA…FTGF), 157–177 (FAPV…AAWL), and 189–209 (FWLG…IHWT). The 241-residue stretch at 221–461 (LQGNIPQNMK…GLHSTAQGFG (241 aa)) folds into the CN hydrolase domain. The Proton acceptor role is filled by glutamate 259. Residue lysine 319 is part of the active site. Cysteine 371 serves as the catalytic Nucleophile. The helical transmembrane segment at 472 to 492 (SLVFALIGLLLLAGSLAAFSG) threads the bilayer.

This sequence belongs to the CN hydrolase family. Apolipoprotein N-acyltransferase subfamily.

It localises to the cell inner membrane. It catalyses the reaction N-terminal S-1,2-diacyl-sn-glyceryl-L-cysteinyl-[lipoprotein] + a glycerophospholipid = N-acyl-S-1,2-diacyl-sn-glyceryl-L-cysteinyl-[lipoprotein] + a 2-acyl-sn-glycero-3-phospholipid + H(+). Its pathway is protein modification; lipoprotein biosynthesis (N-acyl transfer). Functionally, catalyzes the phospholipid dependent N-acylation of the N-terminal cysteine of apolipoprotein, the last step in lipoprotein maturation. The sequence is that of Apolipoprotein N-acyltransferase from Nitrosomonas europaea (strain ATCC 19718 / CIP 103999 / KCTC 2705 / NBRC 14298).